A 276-amino-acid polypeptide reads, in one-letter code: Large ribosomal subunit protein uL2 (276 aa).

Positions 225–276 are disordered; sequence MNPNDHPHGGGEGRNPIGRNPVTPWGKPALGAKTRKKKHPSNRFIVKRRGKK. Basic residues predominate over residues 257-276; sequence KTRKKKHPSNRFIVKRRGKK.

This sequence belongs to the universal ribosomal protein uL2 family. As to quaternary structure, part of the 50S ribosomal subunit. Forms a bridge to the 30S subunit in the 70S ribosome.

Functionally, one of the primary rRNA binding proteins. Required for association of the 30S and 50S subunits to form the 70S ribosome, for tRNA binding and peptide bond formation. It has been suggested to have peptidyltransferase activity; this is somewhat controversial. Makes several contacts with the 16S rRNA in the 70S ribosome. The sequence is that of Large ribosomal subunit protein uL2 from Desulfitobacterium hafniense (strain Y51).